The chain runs to 930 residues: Beta-mannosidase A (930 aa).

An N-terminal signal peptide occupies residues 1 to 21 (MHVKAETVLALLTPGLPSVVG). N-linked (GlcNAc...) asparagine glycosylation is found at Asn-62, Asn-246, Asn-281, Asn-315, and Asn-346. Glu-478 acts as the Proton donor in catalysis. Asn-536, Asn-607, Asn-630, Asn-657, Asn-737, Asn-760, Asn-782, Asn-789, Asn-797, Asn-823, and Asn-909 each carry an N-linked (GlcNAc...) asparagine glycan.

The protein belongs to the glycosyl hydrolase 2 family. Beta-mannosidase A subfamily. In terms of assembly, homodimer.

Its subcellular location is the secreted. The enzyme catalyses Hydrolysis of terminal, non-reducing beta-D-mannose residues in beta-D-mannosides.. It functions in the pathway glycan metabolism; N-glycan degradation. Exoglycosidase that cleaves the single beta-linked mannose residue from the non-reducing end of beta-mannosidic oligosaccharides of various complexity and length. Involved in the degradation of polymeric mannan and galactomannan. This is Beta-mannosidase A (mndA) from Neosartorya fischeri (strain ATCC 1020 / DSM 3700 / CBS 544.65 / FGSC A1164 / JCM 1740 / NRRL 181 / WB 181) (Aspergillus fischerianus).